Here is a 390-residue protein sequence, read N- to C-terminus: S-adenosylmethionine synthase 4 (390 aa).

Glu9 is a Mg(2+) binding site. His15 contributes to the ATP binding site. Glu43 is a binding site for K(+). Residues Glu56 and Gln99 each contribute to the L-methionine site. Residues 167 to 169 (DGK), 235 to 238 (SGRF), Asp246, 252 to 253 (RK), Ala269, Lys273, and Lys277 contribute to the ATP site. Asp246 provides a ligand contact to L-methionine. Lys277 contacts L-methionine.

This sequence belongs to the AdoMet synthase family. In terms of assembly, homotetramer. Requires Mn(2+) as cofactor. Mg(2+) serves as cofactor. The cofactor is Co(2+). K(+) is required as a cofactor.

Its subcellular location is the cytoplasm. It carries out the reaction L-methionine + ATP + H2O = S-adenosyl-L-methionine + phosphate + diphosphate. It participates in amino-acid biosynthesis; S-adenosyl-L-methionine biosynthesis; S-adenosyl-L-methionine from L-methionine: step 1/1. Catalyzes the formation of S-adenosylmethionine from methionine and ATP. The reaction comprises two steps that are both catalyzed by the same enzyme: formation of S-adenosylmethionine (AdoMet) and triphosphate, and subsequent hydrolysis of the triphosphate. This is S-adenosylmethionine synthase 4 (METK4) from Populus trichocarpa (Western balsam poplar).